Here is a 436-residue protein sequence, read N- to C-terminus: Citrate synthase (436 aa).

Residues histidine 311 and aspartate 370 contribute to the active site.

The protein belongs to the citrate synthase family.

The catalysed reaction is oxaloacetate + acetyl-CoA + H2O = citrate + CoA + H(+). The protein operates within carbohydrate metabolism; tricarboxylic acid cycle; isocitrate from oxaloacetate: step 1/2. This is Citrate synthase (gltA) from Rickettsia typhi (strain ATCC VR-144 / Wilmington).